Here is a 465-residue protein sequence, read N- to C-terminus: Probable protein phosphatase 2C 71 (465 aa).

3 disordered regions span residues 14 to 47, 68 to 119, and 133 to 191; these read RPCK…ACRA, RPRD…GEVT, and SGGA…PAEE. Positions 18–30 are enriched in pro residues; sequence LAPPPPPPLPVSP. Composition is skewed to low complexity over residues 84-106 and 133-143; these read AVAP…AAAE and SGGAEATATSG. A PPM-type phosphatase domain is found at 222 to 460; that stretch reads ASGAAILPHP…DDIAVVVSIV (239 aa). The Mn(2+) site is built by D254, G255, D384, and D451.

This sequence belongs to the PP2C family. Requires Mg(2+) as cofactor. Mn(2+) is required as a cofactor.

It carries out the reaction O-phospho-L-seryl-[protein] + H2O = L-seryl-[protein] + phosphate. It catalyses the reaction O-phospho-L-threonyl-[protein] + H2O = L-threonyl-[protein] + phosphate. The protein is Probable protein phosphatase 2C 71 of Oryza sativa subsp. japonica (Rice).